Here is a 514-residue protein sequence, read N- to C-terminus: ATP synthase subunit alpha 2 (514 aa).

170 to 177 (GDRQTGKT) contacts ATP.

The protein belongs to the ATPase alpha/beta chains family. In terms of assembly, F-type ATPases have 2 components, CF(1) - the catalytic core - and CF(0) - the membrane proton channel. CF(1) has five subunits: alpha(3), beta(3), gamma(1), delta(1), epsilon(1). CF(0) has three main subunits: a(1), b(2) and c(9-12). The alpha and beta chains form an alternating ring which encloses part of the gamma chain. CF(1) is attached to CF(0) by a central stalk formed by the gamma and epsilon chains, while a peripheral stalk is formed by the delta and b chains.

The protein localises to the cell inner membrane. It carries out the reaction ATP + H2O + 4 H(+)(in) = ADP + phosphate + 5 H(+)(out). Functionally, produces ATP from ADP in the presence of a proton gradient across the membrane. The alpha chain is a regulatory subunit. The polypeptide is ATP synthase subunit alpha 2 (Hahella chejuensis (strain KCTC 2396)).